The chain runs to 284 residues: Polyamine aminopropyltransferase (284 aa).

In terms of domain architecture, PABS spans 2–237; that stretch reads ELWYTEEQTQ…GYWLFGFASK (236 aa). Residue Q31 coordinates S-methyl-5'-thioadenosine. 2 residues coordinate spermidine: H62 and D86. S-methyl-5'-thioadenosine is bound by residues E106 and 137–138; that span reads DG. The active-site Proton acceptor is D155. A spermidine-binding site is contributed by 155–158; the sequence is DSTD. Position 162 (P162) interacts with S-methyl-5'-thioadenosine.

Belongs to the spermidine/spermine synthase family. As to quaternary structure, homodimer or homotetramer.

Its subcellular location is the cytoplasm. It catalyses the reaction S-adenosyl 3-(methylsulfanyl)propylamine + putrescine = S-methyl-5'-thioadenosine + spermidine + H(+). It functions in the pathway amine and polyamine biosynthesis; spermidine biosynthesis; spermidine from putrescine: step 1/1. In terms of biological role, catalyzes the irreversible transfer of a propylamine group from the amino donor S-adenosylmethioninamine (decarboxy-AdoMet) to putrescine (1,4-diaminobutane) to yield spermidine. The chain is Polyamine aminopropyltransferase from Alkaliphilus metalliredigens (strain QYMF).